Consider the following 217-residue polypeptide: Cytidylate kinase (217 aa).

Residue 9–17 (GPSSSGKSS) coordinates ATP.

The protein belongs to the cytidylate kinase family. Type 1 subfamily.

The protein localises to the cytoplasm. The catalysed reaction is CMP + ATP = CDP + ADP. It carries out the reaction dCMP + ATP = dCDP + ADP. In Mycoplasma genitalium (strain ATCC 33530 / DSM 19775 / NCTC 10195 / G37) (Mycoplasmoides genitalium), this protein is Cytidylate kinase.